We begin with the raw amino-acid sequence, 377 residues long: Transcription factor EC (377 aa).

One can recognise a bHLH domain in the interval 169 to 222; it reads QKKDNHNLIERRRRYNINYRIKELGTLIPKSNDPDMRWNKGTILKASVEYIKWL. The disordered stretch occupies residues 349–377; that stretch reads DPLLSSTSPAASKESSRRSSFSTDDGDDL. A compositionally biased stretch (low complexity) spans 353–370; that stretch reads SSTSPAASKESSRRSSFS.

This sequence belongs to the MiT/TFE family.

The protein localises to the nucleus. Functionally, transcriptional regulator that acts as a repressor or an activator. Binds DNA. The chain is Transcription factor EC (TFEC) from Gallus gallus (Chicken).